The primary structure comprises 944 residues: MLKYALPLYPIAESTDESWSYEHLDKLTTYAEFNETQLLYSEDDDRDHNNETRKPMPHQILVANYTTPRSPIDGIIVIHGVGTGKTLTAILAMINNITAGHDQGMKRGLVLTPNRAVMNSFRNELNCYYRSRFSDRHLNDFEIDRYLSKTFFFNTITAFANTVSRTSDVVLHKEWNATFVVIDEAHDLSVQGVDYPKINGFLKLLTSRKVILLTATPMRNNLSDLVPLHNLLMKLSTHDITVEQFNRDLVTRENCAEYVCARESPTEYFLRKFAGLVSYLPSIVDVNEVDIVNVGERGLYGLRNTVIVVHDMSDVMSATYHYAGAGERSDRDVALLRQRQICRFVFPDGTYGAEGYATWMDNKTGRPTRKFLDMLRGGTGTSREDILKNVAKYSPRYAWIAKSVIDAAERGEKSMVYDDLVTGSGLLVFAAVLEALGLERGYGRGARSFLCLTREVMTVPSIVSALKIFNDRKNVKGANVAIILGSRVIAEGITLKDVIHEHVVAHWNDAETEQIIGRGIRYQSHAYTIADWGSDAKPNVFVYRHATIDSRKKNIKTVDILMYATSEAKRKNIDGALRALSSVALTCRNSNNTFVKSVYRGRYTGRNITNDNTIPLDAPRVTKSFIAQLDQLFDYRNQNVVVKVDSLLKMFNIDPNSKYSLELLFVIMNTIQKHGQLDVDKYIDCNGQYISISKCVDEFRQRPTFVYPFVLDNVSLYGLDVYRDTLAKDIISPLILLDAERHTGGLYPMTRLPVIVIQGLLELAISTQGTKDPYDTLNKMIQYYGTSTNGDNDIRAAVWLATTTGDDSGYRILNEHSGSWVSCPSSMVPFVQAMKSSVEAQLNNDMLAKNLKYYGVLHPSTDDFCIKTVSQNTPTNRRCVMTGRKCVTWSGEKLKELARDIGIDTGDSSSVQNRKTICYNIRSKLEELGAVITDVTCGVQAKRK.

In terms of domain architecture, Helicase ATP-binding spans 66 to 235; it reads TTPRSPIDGI…VPLHNLLMKL (170 aa). 79-86 serves as a coordination point for ATP; the sequence is HGVGTGKT. Residues 183-186 carry the DEAH box motif; that stretch reads DEAH. Residues 451 to 523 enclose the Helicase C-terminal domain; that stretch reads CLTREVMTVP…QIIGRGIRYQ (73 aa).

This sequence belongs to the DEAD box helicase family. DEAH subfamily.

It catalyses the reaction ATP + H2O = ADP + phosphate + H(+). The polypeptide is Putative ATP-dependent RNA helicase (Heliothis virescens ascovirus 3e (HvAV-3e)).